We begin with the raw amino-acid sequence, 351 residues long: Methylthioribose-1-phosphate isomerase (351 aa).

Residues 51 to 53 (RGA), Arg94, and Gln199 contribute to the substrate site. The active-site Proton donor is Asp240. Residue 250–251 (NK) coordinates substrate.

Belongs to the EIF-2B alpha/beta/delta subunits family. MtnA subfamily. Homodimer.

The catalysed reaction is 5-(methylsulfanyl)-alpha-D-ribose 1-phosphate = 5-(methylsulfanyl)-D-ribulose 1-phosphate. It functions in the pathway amino-acid biosynthesis; L-methionine biosynthesis via salvage pathway; L-methionine from S-methyl-5-thio-alpha-D-ribose 1-phosphate: step 1/6. Its function is as follows. Catalyzes the interconversion of methylthioribose-1-phosphate (MTR-1-P) into methylthioribulose-1-phosphate (MTRu-1-P). In Bacillus thuringiensis (strain Al Hakam), this protein is Methylthioribose-1-phosphate isomerase.